The sequence spans 150 residues: Small ribosomal subunit protein eS19 (150 aa).

Belongs to the eukaryotic ribosomal protein eS19 family. As to quaternary structure, part of the 30S ribosomal subunit.

In terms of biological role, may be involved in maturation of the 30S ribosomal subunit. The polypeptide is Small ribosomal subunit protein eS19 (Thermoplasma volcanium (strain ATCC 51530 / DSM 4299 / JCM 9571 / NBRC 15438 / GSS1)).